We begin with the raw amino-acid sequence, 79 residues long: Conotoxin VnMSGL-0122 (79 aa).

A signal peptide spans 1–20 (MSGLGIMVLALLLLVFMATS). A propeptide spanning residues 21 to 44 (HQDGGGKQATQRDAINVRRRRSIT) is cleaved from the precursor. Disulfide bonds link cysteine 52-cysteine 64, cysteine 56-cysteine 73, and cysteine 63-cysteine 77. Leucine 78 carries the leucine amide modification.

This sequence belongs to the conotoxin O3 superfamily. As to expression, expressed by the venom duct.

The protein localises to the secreted. The chain is Conotoxin VnMSGL-0122 from Conus ventricosus (Mediterranean cone).